Here is a 61-residue protein sequence, read N- to C-terminus: Early E3 6.4 kDa protein (61 aa).

The disordered stretch occupies residues 1–25 (MGNAGPLKLHTITKPGTIPYPPHGS).

In Homo sapiens (Human), this protein is Early E3 6.4 kDa protein.